Reading from the N-terminus, the 663-residue chain is Ras and EF-hand domain-containing protein (663 aa).

2 consecutive EF-hand domains span residues 1-33 (MNHA…CREL) and 35-70 (VPAD…VSEA). 10 residues coordinate Ca(2+): D14, N16, S18, R20, D25, D48, D50, D52, Y54, and D59. Residues 122-297 (ELLLQQFEDL…LKKMVMEFQS (176 aa)) adopt a coiled-coil conformation. The segment covering 324-336 (SQENASTKRQLSP) has biased composition (polar residues). The interval 324-343 (SQENASTKRQLSPRNEVLPR) is disordered. GTP contacts are provided by residues 477–482 (GSGKSS), 580–583 (NKVD), and 615–616 (AK).

The protein belongs to the small GTPase superfamily. Rab family. In terms of assembly, homodimer.

It is found in the cytoplasm. The protein resides in the perinuclear region. Binds predominantly GDP, and also GTP. In Danio rerio (Zebrafish), this protein is Ras and EF-hand domain-containing protein (rasef).